A 397-amino-acid polypeptide reads, in one-letter code: 1-deoxy-D-xylulose 5-phosphate reductoisomerase (397 aa).

Residues threonine 10, glycine 11, serine 12, isoleucine 13, asparagine 39, and asparagine 125 each coordinate NADPH. Lysine 126 contacts 1-deoxy-D-xylulose 5-phosphate. Position 127 (glutamate 127) interacts with NADPH. Mn(2+) is bound at residue aspartate 151. 1-deoxy-D-xylulose 5-phosphate contacts are provided by serine 152, glutamate 153, serine 187, and histidine 210. Residue glutamate 153 participates in Mn(2+) binding. Glycine 216 is a binding site for NADPH. 1-deoxy-D-xylulose 5-phosphate contacts are provided by serine 223, asparagine 228, lysine 229, and glutamate 232. Residue glutamate 232 coordinates Mn(2+).

The protein belongs to the DXR family. As to quaternary structure, homodimer. The cofactor is Mg(2+). Requires Mn(2+) as cofactor.

It catalyses the reaction 2-C-methyl-D-erythritol 4-phosphate + NADP(+) = 1-deoxy-D-xylulose 5-phosphate + NADPH + H(+). The protein operates within isoprenoid biosynthesis; isopentenyl diphosphate biosynthesis via DXP pathway; isopentenyl diphosphate from 1-deoxy-D-xylulose 5-phosphate: step 1/6. Its function is as follows. Catalyzes the NADPH-dependent rearrangement and reduction of 1-deoxy-D-xylulose-5-phosphate (DXP) to 2-C-methyl-D-erythritol 4-phosphate (MEP). This is 1-deoxy-D-xylulose 5-phosphate reductoisomerase from Wigglesworthia glossinidia brevipalpis.